Consider the following 150-residue polypeptide: FAD synthase (150 aa).

ATP contacts are provided by residues 11–12 (TF), 16–19 (HPGH), aspartate 96, and tyrosine 124.

It belongs to the archaeal FAD synthase family. Homodimer. Requires a divalent metal cation as cofactor.

The enzyme catalyses FMN + ATP + H(+) = FAD + diphosphate. It participates in cofactor biosynthesis; FAD biosynthesis; FAD from FMN: step 1/1. Its function is as follows. Catalyzes the transfer of the AMP portion of ATP to flavin mononucleotide (FMN) to produce flavin adenine dinucleotide (FAD) coenzyme. The sequence is that of FAD synthase from Methanococcus maripaludis (strain DSM 14266 / JCM 13030 / NBRC 101832 / S2 / LL).